Reading from the N-terminus, the 108-residue chain is Heme-degrading monooxygenase HmoA (108 aa).

Positions 2-95 (FVQLRKMTVK…DYLISTEVSM (94 aa)) constitute an ABM domain. H76 is a heme binding site.

This sequence belongs to the antibiotic biosynthesis monooxygenase family. Homodimer.

Its subcellular location is the cytoplasm. The catalysed reaction is heme b + 3 reduced [NADPH--hemoprotein reductase] + 3 O2 = biliverdin IXalpha + CO + Fe(2+) + 3 oxidized [NADPH--hemoprotein reductase] + 3 H2O + H(+). Allows bacterial pathogens to use the host heme as an iron source. Catalyzes the oxidative degradation of the heme macrocyclic porphyrin ring in the presence of a suitable electron donor such as ascorbate or NADPH--cytochrome P450 reductase, with subsequent release of free iron. The polypeptide is Heme-degrading monooxygenase HmoA (hmoA) (Bacillus subtilis (strain 168)).